Here is a 261-residue protein sequence, read N- to C-terminus: Cytochrome c oxidase subunit 3 (261 aa).

The Mitochondrial matrix portion of the chain corresponds to 1-15; it reads MTHQTHAYHMVNPSP. Residues 16–34 form a helical membrane-spanning segment; it reads WPLTGALSALLMTSGLAMW. At 35 to 40 the chain is on the mitochondrial intermembrane side; the sequence is FHFNST. Residues 41-66 form a helical membrane-spanning segment; it reads LLLAMGLLTNILTMYQWWRDIIREST. Over 67 to 72 the chain is Mitochondrial matrix; sequence FQGHHT. The chain crosses the membrane as a helical span at residues 73 to 105; sequence SIVQKGLRYGMILFIISEVFFFSGFFWAFYHSS. Residues 106 to 128 are Mitochondrial intermembrane-facing; that stretch reads LAPTPELGGCWPPTGIHPLNPLE. The chain crosses the membrane as a helical span at residues 129–152; it reads VPLLNTSVLLASGVSITWAHHSLM. The Mitochondrial matrix portion of the chain corresponds to 153-155; that stretch reads EGN. A helical membrane pass occupies residues 156 to 183; sequence RKNMLQGLFITISLGVYFTLLQASEYYE. At 184–190 the chain is on the mitochondrial intermembrane side; it reads ASFTISD. A helical transmembrane segment spans residues 191–223; it reads GVYGSTFFVATGFHGLHVIIGSTFLIVCFLRQL. Over 224–232 the chain is Mitochondrial matrix; that stretch reads KFHFTSSHH. A helical membrane pass occupies residues 233–256; that stretch reads FGFEAAAWYWHFVDVVWLFLYVSI. The Mitochondrial intermembrane segment spans residues 257–261; it reads YWWGS.

The protein belongs to the cytochrome c oxidase subunit 3 family. Component of the cytochrome c oxidase (complex IV, CIV), a multisubunit enzyme composed of 14 subunits. The complex is composed of a catalytic core of 3 subunits MT-CO1, MT-CO2 and MT-CO3, encoded in the mitochondrial DNA, and 11 supernumerary subunits COX4I, COX5A, COX5B, COX6A, COX6B, COX6C, COX7A, COX7B, COX7C, COX8 and NDUFA4, which are encoded in the nuclear genome. The complex exists as a monomer or a dimer and forms supercomplexes (SCs) in the inner mitochondrial membrane with NADH-ubiquinone oxidoreductase (complex I, CI) and ubiquinol-cytochrome c oxidoreductase (cytochrome b-c1 complex, complex III, CIII), resulting in different assemblies (supercomplex SCI(1)III(2)IV(1) and megacomplex MCI(2)III(2)IV(2)).

The protein resides in the mitochondrion inner membrane. It carries out the reaction 4 Fe(II)-[cytochrome c] + O2 + 8 H(+)(in) = 4 Fe(III)-[cytochrome c] + 2 H2O + 4 H(+)(out). Functionally, component of the cytochrome c oxidase, the last enzyme in the mitochondrial electron transport chain which drives oxidative phosphorylation. The respiratory chain contains 3 multisubunit complexes succinate dehydrogenase (complex II, CII), ubiquinol-cytochrome c oxidoreductase (cytochrome b-c1 complex, complex III, CIII) and cytochrome c oxidase (complex IV, CIV), that cooperate to transfer electrons derived from NADH and succinate to molecular oxygen, creating an electrochemical gradient over the inner membrane that drives transmembrane transport and the ATP synthase. Cytochrome c oxidase is the component of the respiratory chain that catalyzes the reduction of oxygen to water. Electrons originating from reduced cytochrome c in the intermembrane space (IMS) are transferred via the dinuclear copper A center (CU(A)) of subunit 2 and heme A of subunit 1 to the active site in subunit 1, a binuclear center (BNC) formed by heme A3 and copper B (CU(B)). The BNC reduces molecular oxygen to 2 water molecules using 4 electrons from cytochrome c in the IMS and 4 protons from the mitochondrial matrix. In Equus caballus (Horse), this protein is Cytochrome c oxidase subunit 3 (MT-CO3).